The following is a 682-amino-acid chain: Penicillin-binding protein activator LpoA (682 aa).

The signal sequence occupies residues 1–26 (MLPLNSVRTHAGRLVPVMLAALFLAG). Cysteine 27 carries the N-palmitoyl cysteine lipid modification. Cysteine 27 is lipidated: S-diacylglycerol cysteine. Disordered stretches follow at residues 240–262 (AKQL…TGET) and 314–341 (ANNA…VSPT). The span at 248 to 262 (GGTPPAAAAPTTGET) shows a compositional bias: low complexity.

This sequence belongs to the LpoA family. As to quaternary structure, interacts with PBP1a.

The protein resides in the cell outer membrane. Its function is as follows. Regulator of peptidoglycan synthesis that is essential for the function of penicillin-binding protein 1A (PBP1a). The polypeptide is Penicillin-binding protein activator LpoA (Dickeya chrysanthemi (strain Ech1591) (Dickeya zeae (strain Ech1591))).